The primary structure comprises 414 residues: Peptide chain release factor subunit 1 (414 aa).

Belongs to the eukaryotic release factor 1 family. In terms of assembly, heterodimer of two subunits, one of which binds GTP.

Its subcellular location is the cytoplasm. Directs the termination of nascent peptide synthesis (translation) in response to the termination codons UAA, UAG and UGA. This Methanococcoides burtonii (strain DSM 6242 / NBRC 107633 / OCM 468 / ACE-M) protein is Peptide chain release factor subunit 1.